A 466-amino-acid polypeptide reads, in one-letter code: Adenosylhomocysteinase (466 aa).

Thr-57, Asp-132, and Glu-192 together coordinate substrate. 193 to 195 (TTT) serves as a coordination point for NAD(+). Positions 222 and 226 each coordinate substrate. NAD(+)-binding positions include Asn-227, 256-261 (GYGDVG), Glu-279, Asn-314, 335-337 (IGH), and Asn-380.

The protein belongs to the adenosylhomocysteinase family. NAD(+) is required as a cofactor.

It is found in the cytoplasm. It carries out the reaction S-adenosyl-L-homocysteine + H2O = L-homocysteine + adenosine. The protein operates within amino-acid biosynthesis; L-homocysteine biosynthesis; L-homocysteine from S-adenosyl-L-homocysteine: step 1/1. Its function is as follows. May play a key role in the regulation of the intracellular concentration of adenosylhomocysteine. This Mesorhizobium japonicum (strain LMG 29417 / CECT 9101 / MAFF 303099) (Mesorhizobium loti (strain MAFF 303099)) protein is Adenosylhomocysteinase.